A 194-amino-acid chain; its full sequence is Protein GrpE (194 aa).

Basic and acidic residues predominate over residues 1-12 (MNKQKNNRERTP). A disordered region spans residues 1–44 (MNKQKNNRERTPQPEQDTERDEQLTNSHENDIDSAPAAEENDKV).

Belongs to the GrpE family. Homodimer.

The protein localises to the cytoplasm. Functionally, participates actively in the response to hyperosmotic and heat shock by preventing the aggregation of stress-denatured proteins, in association with DnaK and GrpE. It is the nucleotide exchange factor for DnaK and may function as a thermosensor. Unfolded proteins bind initially to DnaJ; upon interaction with the DnaJ-bound protein, DnaK hydrolyzes its bound ATP, resulting in the formation of a stable complex. GrpE releases ADP from DnaK; ATP binding to DnaK triggers the release of the substrate protein, thus completing the reaction cycle. Several rounds of ATP-dependent interactions between DnaJ, DnaK and GrpE are required for fully efficient folding. This chain is Protein GrpE, found in Porphyromonas gingivalis (strain ATCC 33277 / DSM 20709 / CIP 103683 / JCM 12257 / NCTC 11834 / 2561).